The following is a 547-amino-acid chain: Chaperonin GroEL (547 aa).

ATP-binding positions include 30–33, lysine 51, 87–91, glycine 415, 479–481, and aspartate 495; these read TLGP, DGTTT, and NAA.

Belongs to the chaperonin (HSP60) family. In terms of assembly, forms a cylinder of 14 subunits composed of two heptameric rings stacked back-to-back. Interacts with the co-chaperonin GroES.

The protein localises to the cytoplasm. The catalysed reaction is ATP + H2O + a folded polypeptide = ADP + phosphate + an unfolded polypeptide.. Its function is as follows. Together with its co-chaperonin GroES, plays an essential role in assisting protein folding. The GroEL-GroES system forms a nano-cage that allows encapsulation of the non-native substrate proteins and provides a physical environment optimized to promote and accelerate protein folding. This chain is Chaperonin GroEL, found in Pseudomonas fluorescens (strain ATCC BAA-477 / NRRL B-23932 / Pf-5).